A 235-amino-acid chain; its full sequence is Casparian strip membrane protein 2 (235 aa).

Positions 1–46 (MSGSDTSGSVHVDEHGHGKASSSYDGAGAPAPAPAPFQGHRKAGSG) are disordered. At 1–67 (MSGSDTSGSV…GSGGDGLRRC (67 aa)) the chain is on the cytoplasmic side. Residues 68–88 (LGLIDFVLRVAAFGPTLAAAI) form a helical membrane-spanning segment. The Extracellular segment spans residues 89–115 (SIGTSDERLSVFTNYFQFRARFDDFPA). Residues 116-136 (FEFFIVANAIAAGYMVLSLPF) form a helical membrane-spanning segment. Over 137–150 (SAATIMSSKATGVK) the chain is Cytoplasmic. Residues 151-171 (LLLLICDTIMVGLLTAAASAA) traverse the membrane as a helical segment. Residues 172-203 (AAMVYVAHEGNLRANWVPICLQFHGFCQRTSG) are Extracellular-facing. A helical transmembrane segment spans residues 204–224 (AVIASFLAVFVLMVLIVMAAF). Residues 225–235 (TMPRRTHHTAS) lie on the Cytoplasmic side of the membrane.

It belongs to the Casparian strip membrane proteins (CASP) family. Homodimer and heterodimers.

The protein resides in the cell membrane. Regulates membrane-cell wall junctions and localized cell wall deposition. Required for establishment of the Casparian strip membrane domain (CSD) and the subsequent formation of Casparian strips, a cell wall modification of the root endodermis that determines an apoplastic barrier between the intraorganismal apoplasm and the extraorganismal apoplasm and prevents lateral diffusion. The protein is Casparian strip membrane protein 2 of Oryza sativa subsp. indica (Rice).